Here is a 264-residue protein sequence, read N- to C-terminus: Apolipoprotein A-I (264 aa).

An N-terminal signal peptide occupies residues 1–18 (MKAVVLTVAVLFLTGSQA). 2 consecutive repeat copies span residues 67–88 (LKLLDNWDSLSSTVSKVREQIG) and 89–110 (PVSQDFWDKLEKDTVSLRQEMN). The tract at residues 67 to 264 (LKLLDNWDSL…DEATKKLNTQ (198 aa)) is 10 X approximate tandem repeats. M109 carries the methionine sulfoxide modification. One copy of the 3; half-length repeat lies at 111–121 (KDLEEVKRKVQ). A run of 3 repeats spans residues 122 to 143 (PYLDEFQKRWQEDVERYRQQVE), 144 to 165 (PLSKELREGARQKLLELHEKLS), and 166 to 187 (PLGQEMRDRARTHVDALRTHLA). One copy of the 7; truncated repeat lies at 188–207 (PYSDELRQRLAARLEALKEG). Residues 208 to 229 (SSFAEYQAKATEHLSALGEKAK) form repeat 8. One copy of the 9; half-length repeat lies at 230–240 (PALEDLRQGLL). Copy 10 of the repeat occupies 241-264 (PVLESLKLSFWSAVDEATKKLNTQ).

This sequence belongs to the apolipoprotein A1/A4/E family. As to quaternary structure, homodimer. Interacts with APOA1BP and CLU. Component of a sperm activating protein complex (SPAP), consisting of APOA1, an immunoglobulin heavy chain, an immunoglobulin light chain and albumin. Interacts with NDRG1. Interacts with SCGB3A2. Interacts with NAXE and YJEFN3. Glycosylated. In terms of processing, palmitoylated. Post-translationally, phosphorylation sites are present in the extracellular medium.

The protein resides in the secreted. Participates in the reverse transport of cholesterol from tissues to the liver for excretion by promoting cholesterol efflux from tissues and by acting as a cofactor for the lecithin cholesterol acyltransferase (LCAT). As part of the SPAP complex, activates spermatozoa motility. This chain is Apolipoprotein A-I (APOA1), found in Ictidomys tridecemlineatus (Thirteen-lined ground squirrel).